The following is a 101-amino-acid chain: Small ribosomal subunit protein uS14 (101 aa).

A disordered region spans residues 53–72 (RDAAAVRVRNRDSHDGRPRG). Positions 61–70 (RNRDSHDGRP) are enriched in basic and acidic residues.

The protein belongs to the universal ribosomal protein uS14 family. As to quaternary structure, part of the 30S ribosomal subunit. Contacts proteins S3 and S10.

Binds 16S rRNA, required for the assembly of 30S particles and may also be responsible for determining the conformation of the 16S rRNA at the A site. The sequence is that of Small ribosomal subunit protein uS14 from Corynebacterium glutamicum (strain ATCC 13032 / DSM 20300 / JCM 1318 / BCRC 11384 / CCUG 27702 / LMG 3730 / NBRC 12168 / NCIMB 10025 / NRRL B-2784 / 534).